Consider the following 160-residue polypeptide: Phosphopantetheine adenylyltransferase (160 aa).

Position 8 (Ser-8) interacts with substrate. ATP contacts are provided by residues 8-9 (SF) and His-16. Lys-40, Thr-72, and Arg-86 together coordinate substrate. Residues 87-89 (GLR), Glu-97, and 122-128 (YSFLSSS) each bind ATP.

Belongs to the bacterial CoaD family. As to quaternary structure, homohexamer. Mg(2+) serves as cofactor.

Its subcellular location is the cytoplasm. It catalyses the reaction (R)-4'-phosphopantetheine + ATP + H(+) = 3'-dephospho-CoA + diphosphate. The protein operates within cofactor biosynthesis; coenzyme A biosynthesis; CoA from (R)-pantothenate: step 4/5. Functionally, reversibly transfers an adenylyl group from ATP to 4'-phosphopantetheine, yielding dephospho-CoA (dPCoA) and pyrophosphate. The sequence is that of Phosphopantetheine adenylyltransferase from Synechococcus sp. (strain CC9311).